The following is a 480-amino-acid chain: Uronate isomerase (480 aa).

It belongs to the metallo-dependent hydrolases superfamily. Uronate isomerase family.

The enzyme catalyses D-glucuronate = D-fructuronate. It carries out the reaction aldehydo-D-galacturonate = keto-D-tagaturonate. Its pathway is carbohydrate metabolism; pentose and glucuronate interconversion. The chain is Uronate isomerase from Phenylobacterium zucineum (strain HLK1).